Here is a 400-residue protein sequence, read N- to C-terminus: AA13 family lytic polysaccharide monooxygenase A (400 aa).

A signal peptide spans Met1–Gly17. Residue His18 participates in Cu(2+) binding. At His18 the chain carries Methylhistidine. One can recognise a Chitin-binding type-4 domain in the interval His18–Ile247. 7 cysteine pairs are disulfide-bonded: Cys39/Cys42, Cys65/Cys244, Cys101/Cys202, Cys117/Cys144, Cys152/Cys160, Cys166/Cys172, and Cys180/Cys191. Cu(2+) is bound at residue His108. The N-linked (GlcNAc...) asparagine glycan is linked to Asn119. Tyr241 provides a ligand contact to Cu(2+). A disordered region spans residues Gly254 to Thr287. The span at Thr257–Thr287 shows a compositional bias: low complexity. The region spanning Thr293–Arg400 is the CBM20 domain. An N-linked (GlcNAc...) asparagine glycan is attached at Asn379.

The protein belongs to the polysaccharide monooxygenase AA13 family. Cu(2+) serves as cofactor. In terms of processing, O-mannosylated.

It localises to the secreted. It catalyses the reaction starch + reduced acceptor + O2 = D-glucono-1,5-lactone-terminated malto-oligosaccharides + short-chain malto-oligosaccharides + acceptor + H2O.. Activity is inhibited by both beta-cyclodextrin or amylose that block the access to the active site. Its function is as follows. Starch-active lytic polysaccharide monooxygenase that oxidizes the C1 position of starch substrates. Catalysis by LPMOs requires the reduction of the active-site copper from Cu(II) to Cu(I) by a reducing agent and H(2)O(2) or O(2) as a cosubstrate. This chain is AA13 family lytic polysaccharide monooxygenase A, found in Aspergillus terreus (strain NIH 2624 / FGSC A1156).